The chain runs to 735 residues: 2-5A-dependent ribonuclease (735 aa).

The disordered stretch occupies residues 1 to 21 (METPDYNTPQGGTPSAGSQRT). 9 ANK repeats span residues 24–53 (EDDS…DANA), 58–87 (WGWT…DPHR), 91–120 (NGAT…DVNE), 124–153 (NGFT…NVNL), 167–197 (GGAT…EVDA), 201–234 (MGRN…DVNV), 238–268 (RGKT…NIDA), 272–301 (EGKT…DKCD), and 303–328 (LVWI…NPDT). The binding to TMEV Leader protein stretch occupies residues 26–51 (DSSLIKAVQKGDVVRVQQLLEKGADA). 2-5A binding (P-loop) regions lie at residues 229–242 (GADV…GKTP) and 253–275 (GLVQ…EGKT). Residues 364-584 (IHDDYKIAGT…LVDLLGHPFF (221 aa)) form the Protein kinase domain. The C6-type zinc-finger motif lies at 401–436 (CKEVSCLRDCGDHSNLVAFYGREDDKGCLYVCVSLC). The KEN domain maps to 587–722 (WENRYRTLRN…KHFPQPPPRL (136 aa)). The interval 714–735 (HFPQPPPRLSVPEAVGPGGIQS) is disordered.

It belongs to the protein kinase superfamily. As to quaternary structure, (Microbial infection) Interacts (via N-terminus) with TMEV leader protein; this interaction prevents RNASEL activation by its substrate 2'-5' oligoadenylates. In terms of assembly, monomer (inactive form) or homodimer. Interacts with ABCE1; this interaction inhibits the RNASEL. Requires Mn(2+) as cofactor. The cofactor is Mg(2+). In terms of tissue distribution, expressed in spleen, thymus, lung, testis, kidney, liver and heart.

It localises to the cytoplasm. Its subcellular location is the mitochondrion. After binding to 2-5A (5'-phosphorylated 2',5'-linked oligoadenylates) the homodimerization and subsequent activation occurs. Inhibited by RNASEL inhibitor ABCE1/RLI, a cytoplasmic member of the ATP-binding cassette (ABC) transporter family. Its function is as follows. Endoribonuclease that functions in the interferon (IFN) antiviral response. In INF treated and virus infected cells, RNASEL probably mediates its antiviral effects through a combination of direct cleavage of single-stranded viral RNAs, inhibition of protein synthesis through the degradation of rRNA, induction of apoptosis, and induction of other antiviral genes. RNASEL mediated apoptosis is the result of a JNK-dependent stress-response pathway leading to cytochrome c release from mitochondria and caspase-dependent apoptosis. Therefore, activation of RNASEL could lead to elimination of virus infected cells under some circumstances. In the crosstalk between autophagy and apoptosis proposed to induce autophagy as an early stress response to small double-stranded RNA and at later stages of prolonged stress to activate caspase-dependent proteolytic cleavage of BECN1 to terminate autophagy and promote apoptosis. Might play a central role in the regulation of mRNA turnover. Cleaves 3' of UpNp dimers, with preference for UU and UA sequences, to sets of discrete products ranging from between 4 and 22 nucleotides in length. The chain is 2-5A-dependent ribonuclease (Rnasel) from Mus musculus (Mouse).